We begin with the raw amino-acid sequence, 122 residues long: Large ribosomal subunit protein uL18 (122 aa).

The protein belongs to the universal ribosomal protein uL18 family. As to quaternary structure, part of the 50S ribosomal subunit; part of the 5S rRNA/L5/L18/L25 subcomplex. Contacts the 5S and 23S rRNAs.

In terms of biological role, this is one of the proteins that bind and probably mediate the attachment of the 5S RNA into the large ribosomal subunit, where it forms part of the central protuberance. This chain is Large ribosomal subunit protein uL18, found in Pseudothermotoga lettingae (strain ATCC BAA-301 / DSM 14385 / NBRC 107922 / TMO) (Thermotoga lettingae).